Consider the following 343-residue polypeptide: MLFAMQLASASVLPMVLKSAIELDLLEIIASQDTCMSPTEIASHLPTTNPHAPTMIDRILRLLSSYSIVTCSVRSVDDQRVYSPAPVCKYLTKNQDGVSIAALCVAAQDKVLMECWYHMKDAVLDGGIPFNKAYGMPIFDYFAKDLGSNKVFNKGMSDFSSMIIKKILETYKGFQGLTSLVDVGGGTGATLTKILSKYPTIRGINFDLPHVIQDAPEYPGIEHVGGDMFVSVPKGDAIFMKWICHDWNEEQCLKLLKNCYDALPNNGKVIVAEYILPVVPDSSLASKLSVTADVMIVTQNSGGKERTEKEFEALAKAAGFQGFQVFCNAFTIYIIEFSKNISN.

The S-adenosyl-L-homocysteine site is built by Gly184, Asp207, Asp227, Met228, Met240, and Lys241. His245 functions as the Proton acceptor in the catalytic mechanism. Catalysis depends on residues Glu273 and Glu305.

Belongs to the class I-like SAM-binding methyltransferase superfamily. Cation-independent O-methyltransferase family. Homodimer.

The enzyme catalyses 3',5-dihydroxy-3,4',7-trimethoxyflavone + S-adenosyl-L-methionine = 5-hydroxy-3,7,3',4'-tetramethoxyflavone + S-adenosyl-L-homocysteine + H(+). It participates in flavonoid metabolism. Inhibited by nickel (NiCl(2) and NiSO(4)) and para-chloromercuribenzoate. Functionally, catalyzes the 3'- or 5'-O-methylation of partially methylated flavonols, but does not accept quercetin or caffeate as substrates for methylation. The polypeptide is Flavonoid 3'-O-methyltransferase FOMT (Chrysosplenium americanum (American golden saxifrage)).